Reading from the N-terminus, the 352-residue chain is Alanine racemase (352 aa).

K33 serves as the catalytic Proton acceptor; specific for D-alanine. K33 carries the N6-(pyridoxal phosphate)lysine modification. R129 serves as a coordination point for substrate. The active-site Proton acceptor; specific for L-alanine is the Y250. Substrate is bound at residue M298.

Belongs to the alanine racemase family. It depends on pyridoxal 5'-phosphate as a cofactor.

It catalyses the reaction L-alanine = D-alanine. It participates in amino-acid biosynthesis; D-alanine biosynthesis; D-alanine from L-alanine: step 1/1. Catalyzes the interconversion of L-alanine and D-alanine. May also act on other amino acids. The chain is Alanine racemase (alr) from Neisseria gonorrhoeae (strain ATCC 700825 / FA 1090).